Consider the following 217-residue polypeptide: MPKKFQGENTKSAVARARKAEAKAVADAKRQKEIEDAYWQDDDKHVMRKGQRKEDKEKKRLEQLERKKESQRLLEEEDSKMKGKPIKPAAPSKVTRAQIEETLHREEEEKAISEKPKTHLEIPLEENLNRRILEEGEVEARTVEDAIAALSMSKELDRHPERRMKAAFTAFEEINMPRIKQENPNMRLSQLKQLLKKEWMKSPENPMNQQHATYNAQ.

Residues 1–95 (MPKKFQGENT…IKPAAPSKVT (95 aa)) are disordered. Composition is skewed to basic and acidic residues over residues 18–45 (RKAEAKAVADAKRQKEIEDAYWQDDDKH) and 52–74 (RKEDKEKKRLEQLERKKESQRLL). Positions 45-115 (HVMRKGQRKE…EEEEKAISEK (71 aa)) form a coiled coil.

This sequence belongs to the CCDC124 family. Associates with translationally inactive ribosomes in the nonrotated state.

The protein resides in the cytoplasm. It is found in the cytoskeleton. Its subcellular location is the microtubule organizing center. It localises to the centrosome. The protein localises to the midbody. Functionally, ribosome-binding protein involved in ribosome hibernation: associates with translationally inactive ribosomes and stabilizes the nonrotated conformation of the 80S ribosome, thereby promoting ribosome preservation and storage. This Xenopus tropicalis (Western clawed frog) protein is Coiled-coil domain-containing protein 124 (ccdc124).